The sequence spans 947 residues: Zinc finger protein 268 (947 aa).

In terms of domain architecture, KRAB spans 81 to 152; sequence LSFMDVFVDF…QAQVPNQTCP (72 aa). A Phosphoserine; by TBK1 modification is found at serine 178. C2H2-type zinc fingers lie at residues 276–298, 304–326, 332–354, 360–382, 388–410, 416–438, 444–466, 472–494, 500–522, 528–550, 556–578, 584–606, 612–634, 640–662, 668–690, 696–718, 724–746, 752–774, 780–802, 808–830, 836–858, 864–886, 892–914, and 920–942; these read FGCSCCEKAFSSKSYLLVHQQTH, YGCNECGKDFSSKSYLIVHQRIH, HECSECRKTFSFHSQLVIHQRIH, YECCECGKVFSRKDQLVSHQKTH, YVCNECGKAFGLKSQLIIHERIH, YECNECQKAFNTKSNLMVHQRTH, YVCSDCGKAFTFKSQLIVHQGIH, YGCIQCGKGFSLKSQLIVHQRSH, YVCNECGKAFRSKSYLIIHTRTH, HECNNCGKAFSFKSQLIIHQRIH, YECHECGKAFSRKYQLISHQRTH, YECTDCGKAFGLKSQLIIHQRTH, FECSECQKAFNTKSNLIVHQRTH, YSCNECGKAFTFKSQLIVHKGVH, YGCSQCAKTFSLKSQLIVHQRSH, YGCSECGKAFRSKSYLIIHMRTH, HECRECGKSFSFNSQLIVHQRIH, YECSECGKAFNRKDQLISHQRTH, YGCSECGKAFSSKSYLIIHMRTH, YECNECGKAFIWKSLLIVHERTH, YKCSQCEKSFSGKLRLLVHQRMH, YECSECGKAFIRNSQLIVHQRTH, YGCNECGKTFSQKSILSAHQRTH, and CKCTECGKAFCWKSQLIMHQRTH.

It belongs to the krueppel C2H2-type zinc-finger protein family. Interacts (via the KRAB domain) with TRIM28 (via the RBCC domain); the interaction increases ZNF268 nuclear localization activity. Isoform 2 interacts with CHUK and IKBKB; the interaction is further increased in a TNF-alpha-dependent manner. Interacts with TOLLIP; this interaction is impaired by ZNF268 phosphorylation at Ser-178. Forms a ternary complex with TBK1 and SETD4; the interaction between SETD4 and TBK1 is ZNF268-dependent and leads to TBK1 monomethylation. Phosphorylation at Ser-178 stabilizes the protein by interfering with its binding to TOLLIP, hence impairing its degradation by Tollip-mediated selective autophagy system. In terms of tissue distribution, overexpressed in ovarian cancer tissues compared to normal ovarian tissues. Isoform 1 and isoform 2 are expressed in squamous epithelium tissues. Isoform 2 is overexpressed in squamous cervical cancer (at protein level). Expressed in blood cells. Isoform 1 is expressed in pancreas, lung, skeletal muscle, heart, placenta, liver, kidney and brain. Isoform 2 expressed in chronic lymphocytic leukemia (CLL) and several tumor cell lines. Isoform 3 is expressed in several tumor cells. Isoform 5 is expressed in fetal liver and several tumor cells. Isoform 6 is weakly expressed in brain, lung amd small intestin and in several tumor cells. Isoform 7 is expressed in fetal liver and several tumor cells.

The protein resides in the nucleus. It is found in the cytoplasm. Its function is as follows. Acts as a transcriptional repressor. Inhibits erythroid differentiation and tumor cell proliferation. Plays a role during ovarian cancer development and progression. Functionally, contributes to cervical carcinogenesis in part through the TNF-alpha-induced NF-kappa-B signaling pathway by interacting with the I-kappa-B-kinase (IKK) core complex. Involved in the regulation of antiviral interferon signaling. During viral infection, recruits SETD4 to TBK1, leading to TBK1 monomethylation, which is critical for the assembly of TBK1 complex and IRF3 signaling. The sequence is that of Zinc finger protein 268 (ZNF268) from Homo sapiens (Human).